Reading from the N-terminus, the 447-residue chain is Hemogen (447 aa).

The disordered stretch occupies residues 1–91; sequence MDLGKDQSLS…EMKVELPSQL (91 aa). Residues 7 to 86 are necessary for nuclear localization; it reads QSLSKLHQTP…RQQNTEMKVE (80 aa). Composition is skewed to basic and acidic residues over residues 14–25 and 35–49; these read QTPDHHQEESHV and RNREQLRKRKAEAQE. A compositionally biased stretch (basic residues) spans 59–78; the sequence is EKKHKRQRTGKRSERGRKRQ. Phosphoserine is present on residues S89 and S122. The segment at 137 to 156 is disordered; that stretch reads QESVTLQENSSEYQATAVQN. Phosphoserine is present on S200. 2 disordered regions span residues 210 to 280 and 306 to 337; these read AKVL…MAVP and AMSKDPSHKTTQETSVPDKYPPEMYQETPGSE. Phosphothreonine is present on T217. Positions 306-316 are enriched in basic and acidic residues; sequence AMSKDPSHKTT.

It is found in the nucleus. Regulates the proliferation and differentiation of hematopoietic cells. Overexpression block the TPA-induced megakaryocytic differentiation in the K562 cell model. May also prevent cell apoptosis through the activation of the nuclear factor-kappa B (NF-kB). The protein is Hemogen (HEMGN) of Bos taurus (Bovine).